The primary structure comprises 177 residues: Large ribosomal subunit protein uL6 (177 aa).

The protein belongs to the universal ribosomal protein uL6 family. As to quaternary structure, part of the 50S ribosomal subunit.

Functionally, this protein binds to the 23S rRNA, and is important in its secondary structure. It is located near the subunit interface in the base of the L7/L12 stalk, and near the tRNA binding site of the peptidyltransferase center. The protein is Large ribosomal subunit protein uL6 of Pseudomonas putida (strain ATCC 700007 / DSM 6899 / JCM 31910 / BCRC 17059 / LMG 24140 / F1).